Consider the following 155-residue polypeptide: MRKGSPKKRTLLPDPKYKDTLVTRFVNNLMKGGKKNLAYDIFYSAVDIVGDKTGESGLEVWKKALSNVFPSVEVKRRRVGGATLQVPIEVRPERRISLGIKWMLEQARLRGEKTMQERLAYEIIAASQGEGKSVKKKADMHKMAESNRAFSHFKI.

This sequence belongs to the universal ribosomal protein uS7 family. As to quaternary structure, part of the 30S ribosomal subunit. Contacts proteins S9 and S11.

Its function is as follows. One of the primary rRNA binding proteins, it binds directly to 16S rRNA where it nucleates assembly of the head domain of the 30S subunit. Is located at the subunit interface close to the decoding center, probably blocks exit of the E-site tRNA. This is Small ribosomal subunit protein uS7 from Amoebophilus asiaticus (strain 5a2).